The following is a 192-amino-acid chain: Thymidine kinase (192 aa).

ATP-binding positions include serine 9–serine 16 and aspartate 87–glutamine 90. Residue glutamate 88 is the Proton acceptor of the active site. Zn(2+)-binding residues include cysteine 145, cysteine 147, cysteine 182, and histidine 185.

The protein belongs to the thymidine kinase family. In terms of assembly, homotetramer.

The protein resides in the cytoplasm. The catalysed reaction is thymidine + ATP = dTMP + ADP + H(+). This is Thymidine kinase from Vibrio parahaemolyticus serotype O3:K6 (strain RIMD 2210633).